The sequence spans 439 residues: Tubulin beta chain (439 aa).

Positions 11, 69, 138, 142, 143, 144, 204, and 226 each coordinate GTP. Residue Glu69 coordinates Mg(2+).

It belongs to the tubulin family. In terms of assembly, dimer of alpha and beta chains. A typical microtubule is a hollow water-filled tube with an outer diameter of 25 nm and an inner diameter of 15 nM. Alpha-beta heterodimers associate head-to-tail to form protofilaments running lengthwise along the microtubule wall with the beta-tubulin subunit facing the microtubule plus end conferring a structural polarity. Microtubules usually have 13 protofilaments but different protofilament numbers can be found in some organisms and specialized cells. Mg(2+) is required as a cofactor.

Its subcellular location is the cytoplasm. The protein resides in the cytoskeleton. Its function is as follows. Tubulin is the major constituent of microtubules, a cylinder consisting of laterally associated linear protofilaments composed of alpha- and beta-tubulin heterodimers. Microtubules grow by the addition of GTP-tubulin dimers to the microtubule end, where a stabilizing cap forms. Below the cap, tubulin dimers are in GDP-bound state, owing to GTPase activity of alpha-tubulin. This Encephalitozoon intestinalis (Microsporidian parasite) protein is Tubulin beta chain (TUB2).